We begin with the raw amino-acid sequence, 627 residues long: (-)-alpha-pinene synthase 2, chloroplastic (627 aa).

A chloroplast-targeting transit peptide spans 1–36 (MALVSIAPLASKSCLHKSLSSSAHELKTICRTIPTL). Mg(2+) is bound by residues D378, D382, and D530. Residues 378 to 382 (DDMYD) carry the DDXXD motif motif.

Belongs to the terpene synthase family. Tpsd subfamily. The cofactor is Mg(2+). Mn(2+) serves as cofactor.

Its subcellular location is the plastid. The protein localises to the chloroplast. The catalysed reaction is (2E)-geranyl diphosphate = (1S,5S)-beta-pinene + diphosphate. It carries out the reaction (2E)-geranyl diphosphate = (1S,5S)-alpha-pinene + diphosphate. The protein operates within terpene metabolism; oleoresin biosynthesis. Its function is as follows. Terpene synthase (TPS) involved in the biosynthesis of monoterpene natural products included in conifer oleoresin secretions and volatile emissions; these compounds contribute to biotic and abiotic stress defense against herbivores and pathogens. Catalyzes the conversion of (2E)-geranyl diphosphate (GPP) to (1S,5S)-beta-pinene. This Picea glauca (White spruce) protein is (-)-alpha-pinene synthase 2, chloroplastic.